The chain runs to 310 residues: tRNA pseudouridine synthase B (310 aa).

Residue aspartate 38 is the Nucleophile of the active site.

It belongs to the pseudouridine synthase TruB family. Type 1 subfamily.

The catalysed reaction is uridine(55) in tRNA = pseudouridine(55) in tRNA. In terms of biological role, responsible for synthesis of pseudouridine from uracil-55 in the psi GC loop of transfer RNAs. This chain is tRNA pseudouridine synthase B, found in Geotalea uraniireducens (strain Rf4) (Geobacter uraniireducens).